Here is a 253-residue protein sequence, read N- to C-terminus: MANLGCWMLVLFVATWSDLGLCKKRPKPGGWNTGGSRYPGQGSPGGNRYPPQGGGGWGQPHGGGWGQPHGGGWGQPHGGGWGQPHGGGWGQGGGTHSQWNKPSKPKTSMKHMAGAAAAGAVVGGLGGYMLGSAMSRPLIHFGNDYEDRYYRENMYRYPNQVYYRPVDQYSNQNNFVHDCVNITIKQHTVTTTTKGENFTETDVKMMERVVEQMCITQYEKESQAYYQRGSSMVFFSSPPVILLISFLIFLIVG.

The signal sequence occupies residues 1-22 (MANLGCWMLVLFVATWSDLGLC). Positions 23–230 (KKRPKPGGWN…ESQAYYQRGS (208 aa)) are interaction with GRB2, ERI3 and SYN1. The segment at 26–108 (PKPGGWNTGG…WNKPSKPKTS (83 aa)) is disordered. 5 consecutive repeat copies span residues 51 to 59 (PQGGGGWGQ), 60 to 67 (PHGGGWGQ), 68 to 75 (PHGGGWGQ), 76 to 83 (PHGGGWGQ), and 84 to 91 (PHGGGWGQ). The interval 51–91 (PQGGGGWGQPHGGGWGQPHGGGWGQPHGGGWGQPHGGGWGQ) is 5 X 8 AA tandem repeats of P-H-G-G-G-W-G-Q. Residues 52-95 (QGGGGWGQPHGGGWGQPHGGGWGQPHGGGWGQPHGGGWGQGGGT) are compositionally biased toward gly residues. Cu(2+)-binding residues include His-61, Gly-62, Gly-63, His-69, Gly-70, Gly-71, His-77, Gly-78, Gly-79, His-85, Gly-86, and Gly-87. Cys-179 and Cys-214 are joined by a disulfide. Residues Asn-181 and Asn-197 are each glycosylated (N-linked (GlcNAc...) asparagine). Ser-230 carries GPI-anchor amidated serine lipidation. A propeptide spans 231-253 (SMVFFSSPPVILLISFLIFLIVG) (removed in mature form).

The protein belongs to the prion family. As to quaternary structure, monomer and homodimer. Has a tendency to aggregate into amyloid fibrils containing a cross-beta spine, formed by a steric zipper of superposed beta-strands. Soluble oligomers may represent an intermediate stage on the path to fibril formation. Copper binding may promote oligomerization. Interacts with GRB2, APP, ERI3/PRNPIP and SYN1. Mislocalized cytosolically exposed PrP interacts with MGRN1; this interaction alters MGRN1 subcellular location and causes lysosomal enlargement. Interacts with KIAA1191.

It is found in the cell membrane. Its subcellular location is the golgi apparatus. Its primary physiological function is unclear. Has cytoprotective activity against internal or environmental stresses. May play a role in neuronal development and synaptic plasticity. May be required for neuronal myelin sheath maintenance. May play a role in iron uptake and iron homeostasis. Soluble oligomers are toxic to cultured neuroblastoma cells and induce apoptosis (in vitro). Association with GPC1 (via its heparan sulfate chains) targets PRNP to lipid rafts. Also provides Cu(2+) or Zn(2+) for the ascorbate-mediated GPC1 deaminase degradation of its heparan sulfate side chains. In Trachypithecus francoisi (Francois' leaf monkey), this protein is Major prion protein (PRNP).